The following is a 226-amino-acid chain: Glutathione S-transferase kappa 1 (226 aa).

Residue Ser-16–Tyr-18 coordinates glutathione. Residues Lys-36 and Lys-49 each carry the N6-succinyllysine modification. Asn-53 contributes to the glutathione binding site. N6-acetyllysine; alternate occurs at positions 68 and 74. 2 positions are modified to N6-succinyllysine; alternate: Lys-68 and Lys-74. An N6-acetyllysine modification is found at Lys-85. Lys-93 and Lys-116 each carry N6-acetyllysine; alternate. N6-succinyllysine; alternate is present on residues Lys-93 and Lys-116. At Lys-144 the chain carries N6-succinyllysine. Lys-158 carries the N6-acetyllysine; alternate modification. Lys-158 bears the N6-succinyllysine; alternate mark. Lys-165 carries the post-translational modification N6-acetyllysine. An N6-acetyllysine; alternate mark is found at Lys-167 and Lys-177. N6-succinyllysine; alternate is present on residues Lys-167 and Lys-177. Residue Leu-183 coordinates glutathione. The residue at position 193 (Lys-193) is an N6-succinyllysine. Ser-200–Asp-201 contacts glutathione.

Belongs to the GST superfamily. Kappa family. Homodimer.

It localises to the mitochondrion matrix. The enzyme catalyses RX + glutathione = an S-substituted glutathione + a halide anion + H(+). Glutathione S-transferase that catalyzes the conjugation of glutathione to exogenous and endogenous compounds. The polypeptide is Glutathione S-transferase kappa 1 (Gstk1) (Rattus norvegicus (Rat)).